The sequence spans 1532 residues: Multidrug resistance-associated protein 1 (1532 aa).

The Extracellular portion of the chain corresponds to 1–33 (MALSSFCSSDGSDPLWDWNVTWHTSNPDFTKCF). Asparagine 19 carries N-linked (GlcNAc...) asparagine glycosylation. Residues 34-54 (QNTVLTWVPCFYLWSCFPLYF) form a helical membrane-spanning segment. The Cytoplasmic segment spans residues 55-74 (LYLSRHDRGYIQMTHLNKAK). The helical transmembrane segment at 75-95 (TALGFFLWIICWADLFYSFWE) threads the bilayer. Residues 96–100 (RSQGM) lie on the Extracellular side of the membrane. The chain crosses the membrane as a helical span at residues 101 to 121 (LLAPVLLVSPTLLGITMLLAT). Residues 122–133 (FLIQFERRKGVQ) lie on the Cytoplasmic side of the membrane. Residues 134 to 154 (SSGIMLTFWLVALLCALAILR) form a helical membrane-spanning segment. Over 155–172 (SKIISALKKDAQVDMFRD) the chain is Extracellular. The helical transmembrane segment at 173-193 (SAFYLYFTLVFIQLVLSCFSD) threads the bilayer. The Cytoplasmic segment spans residues 194–317 (SSPLFSETVR…KDRDPSLFKV (124 aa)). Position 277 is a phosphotyrosine (tyrosine 277). Serine 290 bears the Phosphoserine mark. Residues 318–338 (LYKTFGPYFLMSFLYKALHDL) traverse the membrane as a helical segment. Residues 326 to 609 (FLMSFLYKAL…LPMVISSIVQ (284 aa)) enclose the ABC transmembrane type-1 1 domain. The Extracellular portion of the chain corresponds to 339 to 364 (MMFAGPEILELIINFVNDREAPDWQG). Residues 365–385 (YLYTALLFVSACLQTLALHQY) traverse the membrane as a helical segment. Topologically, residues 386 to 441 (FHICFVTGMRIKTAVVGAVYRKALVITNSARKSSTVGEIVNLMSVDAQRFMDLATY) are cytoplasmic. Residues 442–462 (INMIWSAPLQVTLALYFLWLN) traverse the membrane as a helical segment. Residues 463–465 (LGP) are Extracellular-facing. The helical transmembrane segment at 466 to 486 (SVLAGVAVMILMVPFNAVMAM) threads the bilayer. Residues 487–548 (KTKTYQVAHM…VLKKSAYLAA (62 aa)) lie on the Cytoplasmic side of the membrane. Residue lysine 504 is modified to N6-succinyllysine. The helical transmembrane segment at 549-569 (VGTFTWVCTPFLVALSTFAVF) threads the bilayer. Residues 570-591 (VTVDEKNILDAKKAFVSLALFN) lie on the Extracellular side of the membrane. Residues 592–612 (ILRFPLNILPMVISSIVQASV) form a helical membrane-spanning segment. At 613 to 967 (SLKRLRIFLS…VKLSVYWNYM (355 aa)) the chain is on the cytoplasmic side. The 225-residue stretch at 645–869 (ITVKNATFTW…DGAFAEFVRT (225 aa)) folds into the ABC transporter 1 domain. 679-686 (GQVGCGKS) provides a ligand contact to ATP. A phosphoserine mark is found at serine 879, serine 883, serine 916, and serine 931. A helical transmembrane segment spans residues 968-988 (KAIGLCISFLSIFLFLCNHVS). Positions 975-1257 (SFLSIFLFLC…LVRMSSEMET (283 aa)) constitute an ABC transmembrane type-1 2 domain. Residues 989-1026 (ALASNYWLSLWTDDRPAVNGTQENRNFRLSVYGALGIL) lie on the Extracellular side of the membrane. Residues 1027-1047 (QGVAVFGYSMAVSIGGIFASR) form a helical membrane-spanning segment. The Cytoplasmic portion of the chain corresponds to 1048–1090 (RLHLDLLQNVLRSPMSFFERTPSGNLVNRFSKELDTVDSMIPQ). The helical transmembrane segment at 1091–1111 (VIKMFMGSLFSVIGAVIIILL) threads the bilayer. A topological domain (extracellular) is located at residue alanine 1112. Residues 1113-1133 (TPIAAVIIPPLGLVYFFVQRF) form a helical membrane-spanning segment. Over 1134–1204 (YVASSRQLKR…VANRWLAVRL (71 aa)) the chain is Cytoplasmic. A helical membrane pass occupies residues 1205-1225 (ECVGNCIVLFAALFAVISRHS). The Extracellular segment spans residues 1226–1227 (LS). Residues 1228–1248 (AGLVGLSVSYSLQITAYLNWL) form a helical membrane-spanning segment. At 1249–1532 (VRMSSEMETN…YSMAKDAGLV (284 aa)) the chain is on the cytoplasmic side. Positions 1294–1528 (VEFRDYCLRY…RGVFYSMAKD (235 aa)) constitute an ABC transporter 2 domain. Residue 1328-1335 (GRTGAGKS) coordinates ATP.

The protein belongs to the ABC transporter superfamily. ABCC family. Conjugate transporter (TC 3.A.1.208) subfamily. Post-translationally, glycosylated. Skeletal muscle, brain, heart, spleen, lung and kidney.

The protein resides in the cell membrane. Its subcellular location is the basolateral cell membrane. The catalysed reaction is ATP + H2O + xenobioticSide 1 = ADP + phosphate + xenobioticSide 2.. It carries out the reaction an S-substituted glutathione(in) + ATP + H2O = an S-substituted glutathione(out) + ADP + phosphate + H(+). It catalyses the reaction sphing-4-enine 1-phosphate(in) + ATP + H2O = sphing-4-enine 1-phosphate(out) + ADP + phosphate + H(+). The enzyme catalyses leukotriene C4(in) + ATP + H2O = leukotriene C4(out) + ADP + phosphate + H(+). The catalysed reaction is 17beta-estradiol 17-O-(beta-D-glucuronate)(in) + ATP + H2O = 17beta-estradiol 17-O-(beta-D-glucuronate)(out) + ADP + phosphate + H(+). It carries out the reaction daunorubicin(in) + ATP + H2O = daunorubicin(out) + ADP + phosphate + H(+). It catalyses the reaction vincristine(in) + ATP + H2O = vincristine(out) + ADP + phosphate + H(+). The enzyme catalyses 2',3'-cGAMP(in) + ATP + H2O = 2',3'-cGAMP(out) + ADP + phosphate + H(+). The catalysed reaction is S-[(2E,6E,10E)-geranylgeranyl]-L-glutathione(in) + ATP + H2O = S-[(2E,6E,10E)-geranylgeranyl]-L-glutathione(out) + ADP + phosphate + H(+). It carries out the reaction prostaglandin A2-S-(R)-glutathione(in) + ATP + H2O = prostaglandin A2-S-(R)-glutathione(out) + ADP + phosphate + H(+). It catalyses the reaction prostaglandin A2-S-(S)-glutathione(in) + ATP + H2O = prostaglandin A2-S-(S)-glutathione(out) + ADP + phosphate + H(+). Its activity is regulated as follows. MK 571 inhibits sphingosine 1-phosphate and leukotriene C4 export. Functionally, mediates export of organic anions and drugs from the cytoplasm. Mediates ATP-dependent transport of glutathione and glutathione conjugates, leukotriene C4, estradiol-17-beta-o-glucuronide, methotrexate, antiviral drugs and other xenobiotics. Confers resistance to anticancer drugs by decreasing accumulation of drug in cells, and by mediating ATP- and GSH-dependent drug export. Hydrolyzes ATP with low efficiency. Catalyzes the export of sphingosine 1-phosphate from mast cells independently of their degranulation. Participates in inflammatory response by allowing export of leukotriene C4 from leukotriene C4-synthesizing cells. Exports S-geranylgeranyl-glutathione (GGG) in lymphoid cells and stromal compartments of lymphoid organs. ABCC1 (via extracellular transport) with GGT5 (via GGG catabolism) establish GGG gradients within lymphoid tissues to position P2RY8-positive lymphocytes at germinal centers in lymphoid follicles and restrict their chemotactic transmigration from blood vessels to the bone marrow parenchyma. Mediates basolateral export of GSH-conjugated R- and S-prostaglandin A2 diastereomers in polarized epithelial cells. This Rattus norvegicus (Rat) protein is Multidrug resistance-associated protein 1.